The chain runs to 616 residues: General alpha-glucoside permease (616 aa).

Residues 1 to 115 lie on the Cytoplasmic side of the membrane; it reads MKNIISLVSK…AALWSILVST (115 aa). The segment covering 15–27 has biased composition (basic and acidic residues); sequence SKNEDKNISESSR. The tract at residues 15 to 40 is disordered; the sequence is SKNEDKNISESSRDIVNQQEVFNTED. A helical membrane pass occupies residues 116–136; that stretch reads TLVMEGYDTALLSALYALPVF. Over 137-160 the chain is Extracellular; that stretch reads QRKFGTLNGEGSYEITSQWQIGLN. A helical transmembrane segment spans residues 161-181; it reads MCVLCGEMIGLQITTYMVEFM. At 182 to 191 the chain is on the cytoplasmic side; that stretch reads GNRYTMITAL. Residues 192 to 212 traverse the membrane as a helical segment; sequence GLLTAYIFILYYCKSLAMIAV. The Extracellular segment spans residues 213 to 214; the sequence is GQ. The chain crosses the membrane as a helical span at residues 215 to 235; that stretch reads ILSAIPWGCFQSLAVTYASEV. Over 236 to 242 the chain is Cytoplasmic; the sequence is CPLALRY. A helical membrane pass occupies residues 243–263; the sequence is YMTSYSNICWLFGQIFASGIM. At 264 to 278 the chain is on the extracellular side; that stretch reads KNSQENLGNSDLGYK. The chain crosses the membrane as a helical span at residues 279-299; sequence LPFALQWIWPAPLMIGIFFAP. At 300–373 the chain is on the cytoplasmic side; it reads ESPWWLVRKD…VNGRRTRLAC (74 aa). Residues 374 to 394 form a helical membrane-spanning segment; that stretch reads LTWVAQNSSGAVLLGYSTYFF. Over 395 to 404 the chain is Extracellular; sequence ERAGMATDKA. The helical transmembrane segment at 405 to 425 threads the bilayer; the sequence is FTFSLIQYCLGLAGTLCSWVI. Residues 426–433 lie on the Cytoplasmic side of the membrane; sequence SGRVGRWT. Residues 434-454 form a helical membrane-spanning segment; sequence ILTYGLAFQMVCLFIIGGMGF. The Extracellular segment spans residues 455 to 466; that stretch reads GSGSSASNGAGG. A helical membrane pass occupies residues 467–487; the sequence is LLLALSFFYNAGIGAVVYCIV. The Cytoplasmic segment spans residues 488-504; sequence AEIPSAELRTKTIVLAR. The chain crosses the membrane as a helical span at residues 505–525; it reads ICYNLMAVINAILTPYMLNVS. At 526–532 the chain is on the extracellular side; that stretch reads DWNWGAK. A helical membrane pass occupies residues 533 to 553; sequence TGLYWGGFTAVTLAWVIIDLP. Residues 554–616 lie on the Cytoplasmic side of the membrane; that stretch reads ETTGRTFSEI…QRELNAADKC (63 aa). Residues 587–616 form a disordered region; the sequence is GKTQHDSLADESISQSSSIKQRELNAADKC. Over residues 606–616 the composition is skewed to basic and acidic residues; it reads KQRELNAADKC.

Belongs to the major facilitator superfamily. Sugar transporter (TC 2.A.1.1) family.

The protein localises to the cell membrane. High-affinity uptake of alpha-glucosides such as maltose, turanose, isomaltose, alpha-methylglucoside, maltotriose, palatinose, trehalose, melezitose and glucose. Acts with the concomitant transport of protons into the cell (symport system). Provides an alternative and minor mechanism for growth on trehalose carbon source by transporting trehalose into the cytoplasm for conversion to glucose by neutral trehalase NTH1. This Saccharomyces cerevisiae (strain CEN.PK113-7D) (Baker's yeast) protein is General alpha-glucoside permease.